Reading from the N-terminus, the 415-residue chain is Serine hydroxymethyltransferase (415 aa).

Residues leucine 117 and 121-123 (GHL) contribute to the (6S)-5,6,7,8-tetrahydrofolate site. N6-(pyridoxal phosphate)lysine is present on lysine 226. (6S)-5,6,7,8-tetrahydrofolate contacts are provided by residues glutamate 241 and 349 to 351 (SPF).

The protein belongs to the SHMT family. Homodimer. Pyridoxal 5'-phosphate is required as a cofactor.

Its subcellular location is the cytoplasm. It carries out the reaction (6R)-5,10-methylene-5,6,7,8-tetrahydrofolate + glycine + H2O = (6S)-5,6,7,8-tetrahydrofolate + L-serine. The protein operates within one-carbon metabolism; tetrahydrofolate interconversion. It functions in the pathway amino-acid biosynthesis; glycine biosynthesis; glycine from L-serine: step 1/1. Its function is as follows. Catalyzes the reversible interconversion of serine and glycine with tetrahydrofolate (THF) serving as the one-carbon carrier. This reaction serves as the major source of one-carbon groups required for the biosynthesis of purines, thymidylate, methionine, and other important biomolecules. Also exhibits THF-independent aldolase activity toward beta-hydroxyamino acids, producing glycine and aldehydes, via a retro-aldol mechanism. This Geobacter sulfurreducens (strain ATCC 51573 / DSM 12127 / PCA) protein is Serine hydroxymethyltransferase.